A 238-amino-acid chain; its full sequence is 7-cyano-7-deazaguanine synthase (238 aa).

ATP is bound at residue 14-24; that stretch reads FSGGQDSATCL. Zn(2+) is bound by residues Cys-202, Cys-217, Cys-220, and Cys-223.

It belongs to the QueC family. Requires Zn(2+) as cofactor.

The enzyme catalyses 7-carboxy-7-deazaguanine + NH4(+) + ATP = 7-cyano-7-deazaguanine + ADP + phosphate + H2O + H(+). It participates in purine metabolism; 7-cyano-7-deazaguanine biosynthesis. Catalyzes the ATP-dependent conversion of 7-carboxy-7-deazaguanine (CDG) to 7-cyano-7-deazaguanine (preQ(0)). The protein is 7-cyano-7-deazaguanine synthase of Nitrobacter winogradskyi (strain ATCC 25391 / DSM 10237 / CIP 104748 / NCIMB 11846 / Nb-255).